Consider the following 201-residue polypeptide: MEMEEFAPSYYYYVEPEMGYQPQQPNPMEDLITVYHLDDISRQVARTNEDGTKAVKLRKSYKNQITDLSGKFSSIPNRENRKGGEIAHILFQNNPDMMNQVHRSPDMTDEQWREALMNVDASLFQAPNMDWEVCQSVLSQFDRSYPTEFQNDPNFHVDDLAFDLDGTGKSNAKKRKNRSNGSSMATPNSEMQDDVKRRRLE.

The interval 166-201 is disordered; sequence GTGKSNAKKRKNRSNGSSMATPNSEMQDDVKRRRLE.

Belongs to the Mediator complex subunit 19 family. In terms of assembly, component of the Mediator complex.

Its subcellular location is the nucleus. Its function is as follows. Component of the Mediator complex, a coactivator involved in the regulated transcription of nearly all RNA polymerase II-dependent genes. Mediator functions as a bridge to convey information from gene-specific regulatory proteins to the basal RNA polymerase II transcription machinery. Mediator is recruited to promoters by direct interactions with regulatory proteins and serves as a scaffold for the assembly of a functional preinitiation complex with RNA polymerase II and the general transcription factors. This chain is Mediator of RNA polymerase II transcription subunit 19 (ROX3), found in Candida glabrata (strain ATCC 2001 / BCRC 20586 / JCM 3761 / NBRC 0622 / NRRL Y-65 / CBS 138) (Yeast).